Reading from the N-terminus, the 46-residue chain is Lantibiotic streptin (46 aa).

The propeptide occupies Met1–Val24.

The protein belongs to the type A lantibiotic family. Post-translationally, maturation of lantibiotics involves the enzymatic conversion of Thr, and Ser into dehydrated AA and the formation of thioether bonds with cysteine. This is followed by membrane translocation and cleavage of the modified precursor.

Its function is as follows. Lanthionine-containing peptide antibiotic (lantibiotic) active on certain Gram-positive bacteria. The bactericidal activity of lantibiotics is based on depolarization of energized bacterial cytoplasmic membranes, initiated by the formation of aqueous transmembrane pores. The sequence is that of Lantibiotic streptin (srtA) from Streptococcus pyogenes serotype M1.